The chain runs to 120 residues: Basic phospholipase A2 Cc2-PLA2 (120 aa).

7 disulfide bridges follow: Cys-26-Cys-113, Cys-28-Cys-44, Cys-43-Cys-95, Cys-49-Cys-120, Cys-50-Cys-88, Cys-57-Cys-81, and Cys-75-Cys-86. Residues Tyr-27, Gly-29, and Gly-31 each contribute to the Ca(2+) site. The active site involves His-47. Asp-48 contributes to the Ca(2+) binding site. Residue Asp-89 is part of the active site.

This sequence belongs to the phospholipase A2 family. Group II subfamily. D49 sub-subfamily. In terms of assembly, monomer. Ca(2+) serves as cofactor. As to expression, expressed by the venom gland.

The protein resides in the secreted. It carries out the reaction a 1,2-diacyl-sn-glycero-3-phosphocholine + H2O = a 1-acyl-sn-glycero-3-phosphocholine + a fatty acid + H(+). Functionally, basic phospholipase A2 that inhibits ADP-, thrombin- and arachidonic acid-induced platelet aggregation. It also exhibits anticoagulant effects upon human plasma in vitro. It induces a high hemolytic activity reaching its maximum after 24 hours. It induces a marked elevation of plasmatic levels of interleukin-6 and -10, eosinophil peroxidase and complement lytic activities and it also provokes a drastic increase of lymphocytes, monocytes and neutrophils in peripheral blood accompanied by a rapid intense migration of neutrophils to the peritoneal cavity. PLA2 catalyzes the calcium-dependent hydrolysis of the 2-acyl groups in 3-sn-phosphoglycerides. This chain is Basic phospholipase A2 Cc2-PLA2, found in Cerastes cerastes (Horned desert viper).